A 92-amino-acid polypeptide reads, in one-letter code: Small ribosomal subunit protein uS17 (92 aa).

This sequence belongs to the universal ribosomal protein uS17 family. As to quaternary structure, part of the 30S ribosomal subunit.

In terms of biological role, one of the primary rRNA binding proteins, it binds specifically to the 5'-end of 16S ribosomal RNA. The polypeptide is Small ribosomal subunit protein uS17 (Cupriavidus pinatubonensis (strain JMP 134 / LMG 1197) (Cupriavidus necator (strain JMP 134))).